The primary structure comprises 246 residues: Flavin-dependent thymidylate synthase (246 aa).

The 225-residue stretch at 17 to 241 (ITVELVKSAA…PLTHAAFNAN (225 aa)) folds into the ThyX domain. Residues serine 69, 92–94 (RHR), and glutamate 101 contribute to the FAD site. DUMP contacts are provided by residues 89-92 (EFMR), 101-105 (EESGR), and arginine 173. Residues 92–103 (RHRVGWSYNEES) carry the ThyX motif motif. Residues 189–191 (NAR) and histidine 195 contribute to the FAD site. Arginine 200 is a binding site for dUMP. Residue arginine 200 is the Involved in ionization of N3 of dUMP, leading to its activation of the active site.

It belongs to the thymidylate synthase ThyX family. As to quaternary structure, homotetramer. The cofactor is FAD.

The enzyme catalyses dUMP + (6R)-5,10-methylene-5,6,7,8-tetrahydrofolate + NADPH + H(+) = dTMP + (6S)-5,6,7,8-tetrahydrofolate + NADP(+). It participates in pyrimidine metabolism; dTTP biosynthesis. Its function is as follows. Catalyzes the reductive methylation of 2'-deoxyuridine-5'-monophosphate (dUMP) to 2'-deoxythymidine-5'-monophosphate (dTMP) while utilizing 5,10-methylenetetrahydrofolate (mTHF) as the methyl donor, and NADPH and FADH(2) as the reductant. The polypeptide is Flavin-dependent thymidylate synthase (Streptomyces coelicolor (strain ATCC BAA-471 / A3(2) / M145)).